The chain runs to 434 residues: Putative ankyrin repeat protein FPV023 (434 aa).

7 ANK repeats span residues 33-62 (RLKI…DPVA), 134-163 (LTIS…DINF), 167-197 (IGNT…DINI), 201-230 (YGTT…DPNS), 236-265 (IGTK…DPNI), 269-299 (AGVT…DPNI), and 303-330 (NGTT…DINI).

The chain is Putative ankyrin repeat protein FPV023 from Fowlpox virus (strain NVSL) (FPV).